We begin with the raw amino-acid sequence, 162 residues long: Probable metalloprotease y4jG (162 aa).

The 139-residue stretch at 9–147 folds into the MPN domain; that stretch reads TVALPRDCVS…YRLDAKANWN (139 aa). Positions 94, 96, and 107 each coordinate Zn(2+).

The protein belongs to the peptidase M67B family.

The protein is Probable metalloprotease y4jG of Sinorhizobium fredii (strain NBRC 101917 / NGR234).